A 504-amino-acid polypeptide reads, in one-letter code: MKYNNEKKKGGSFKRGGKKGSNERDPFFEEEPKKRRKVSYDDDDIESVDSDAEENGFTGGDEDGRRVDGEVEDEDEFADETAGEKRKRLAEEMLNRRREAMRREREEADNDDDDDEDDDETIKKSLMQKQQEDSGRIRRLIASRVQEPLSTDGFSVIVKHRRSVVSVALSDDDSRGFSASKDGTIMHWDVSSGKTDKYIWPSDEILKSHGMKLREPRNKNHSRESLALAVSSDGRYLATGGVDRHVHIWDVRTREHVQAFPGHRNTVSCLCFRYGTSELYSGSFDRTVKVWNVEDKAFITENHGHQGEILAIDALRKERALTVGRDRTMLYHKVPESTRMIYRAPASSLESCCFISDNEYLSGSDNGTVALWGMLKKKPVFVFKNAHQDIPDGITTNGILENGDHEPVNNNCSANSWVNAVATSRGSDLAASGAGNGFVRLWAVETNAIRPLYELPLTGFVNSLAFAKSGKFLIAGVGQETRFGRWGCLKSAQNGVAIHPLRLA.

The tract at residues 1 to 120 (MKYNNEKKKG…DDDDDEDDDE (120 aa)) is disordered. Over residues 20-33 (GSNERDPFFEEEPK) the composition is skewed to basic and acidic residues. Composition is skewed to acidic residues over residues 41-54 (DDDD…DAEE) and 70-81 (EVEDEDEFADET). Over residues 89–106 (LAEEMLNRRREAMRRERE) the composition is skewed to basic and acidic residues. Positions 107 to 120 (EADNDDDDDEDDDE) are enriched in acidic residues. WD repeat units follow at residues 159 to 198 (KHRR…TDKY), 220 to 259 (NHSR…HVQA), 262 to 301 (GHRN…FITE), 304 to 342 (GHQG…RMIY), 344 to 382 (APAS…PVFV), 413 to 452 (SANS…IRPL), and 456 to 496 (PLTG…QNGV).

It belongs to the WD repeat RRP9 family. As to expression, expressed in tissues with active in cell division such as shoot apexes, root tips, lateral root primordia, embryos, endosperm, pollen grains and embryo sacs.

It is found in the nucleus. It localises to the nucleolus. Functionally, component of a nucleolar small nuclear ribonucleoprotein particle (snoRNP) thought to participate in the processing and modification of pre-ribosomal RNA. Essential for embryogenesis. Plays a critical role in embryo sac development and gametic cell fate. Required for the correct positioning of the first division plane of zygote. May function during early embryogenesis. The polypeptide is U3 snoRNP-associated protein-like YAO (Arabidopsis thaliana (Mouse-ear cress)).